The chain runs to 437 residues: Putative permease IIC component (437 aa).

The PTS EIIC type-2 domain maps to 2-437; that stretch reads FDYILSLGGT…LFLRKRELSE (436 aa). Helical transmembrane passes span 5–25, 35–55, 88–108, 134–154, 173–193, 215–235, 236–256, 302–322, 325–345, 354–374, 385–405, and 410–430; these read ILSLGGTVFVPIIMIVIGLIF, AGVTVGIGFVGMGLVIVMAID, ATAIGAMIIPVIFLLNVAMLV, LMTGSLIYGVLGAICHAALSL, ISIPQGYGSSSVPLFVLLDAI, GMVGDPVIIGVVLGLIFGLAA, GEGFKGCASLMITVAAIMVLF, TIAVGLLLIPIMLILASILPG, VLPLADLPVAPFFICMATVIH, ISGVIVMITVLLIATQFAPYF, FAGESAQISALSVGNMFGWSI, and SLGIIGVVVAVGIVASVVLFL.

It is found in the cell inner membrane. In terms of biological role, the phosphoenolpyruvate-dependent sugar phosphotransferase system (PTS), a major carbohydrate active -transport system, catalyzes the phosphorylation of incoming sugar substrates concomitant with their translocation across the cell membrane. In Escherichia coli (strain K12), this protein is Putative permease IIC component (sgcC).